The following is a 262-amino-acid chain: Dehydrin COR410 (262 aa).

Disordered regions lie at residues 1 to 153 and 187 to 262; these read MEDE…HDTD and LPGG…KPSA. 2 stretches are compositionally biased toward basic and acidic residues: residues 34 to 45 and 53 to 74; these read KKAEEDKEKEEE and VSVE…KETL. The span at 89–101 shows a compositional bias: acidic residues; that stretch reads SDEEEEEVIDDNG. 2 tandem repeats follow at residues 106–126 and 173–193. Residues 106–245 are 3 X 21 AA repeats, Lys-rich; the sequence is RKKKKGLKEK…MDKLPGYHKT (140 aa). Basic and acidic residues-rich tracts occupy residues 113–130 and 187–196; these read KEKL…EGEH and LPGGHKKPED. The span at 197–209 shows a compositional bias: low complexity; it reads AAAVPVTHAAPAP. Residues 225 to 245 form repeat 3; sequence AKEKKGLLGKIMDKLPGYHKT. Positions 244–262 are enriched in basic and acidic residues; it reads KTGEEDKAAAATGEHKPSA.

In terms of tissue distribution, expressed in roots, crown and leaves during cold acclimation.

This chain is Dehydrin COR410 (COR410), found in Triticum aestivum (Wheat).